The chain runs to 1116 residues: DNA-directed RNA polymerase subunit beta (1116 aa).

Basic and acidic residues predominate over residues 1070 to 1100 (KIREEEKEREKEREAREMEDPEKIVSKIDAK). Residues 1070–1116 (KIREEEKEREKEREAREMEDPEKIVSKIDAKQKKKYKKTKKQTEKKK) are disordered. Residues 1101–1116 (QKKKYKKTKKQTEKKK) are compositionally biased toward basic residues.

It belongs to the RNA polymerase beta chain family. As to quaternary structure, in plastids the minimal PEP RNA polymerase catalytic core is composed of four subunits: alpha, beta, beta', and beta''. When a (nuclear-encoded) sigma factor is associated with the core the holoenzyme is formed, which can initiate transcription.

Its subcellular location is the plastid. The protein localises to the chloroplast. The catalysed reaction is RNA(n) + a ribonucleoside 5'-triphosphate = RNA(n+1) + diphosphate. DNA-dependent RNA polymerase catalyzes the transcription of DNA into RNA using the four ribonucleoside triphosphates as substrates. The protein is DNA-directed RNA polymerase subunit beta of Heterosigma akashiwo (Chromophytic alga).